Here is a 283-residue protein sequence, read N- to C-terminus: Serine protease 57 (283 aa).

The N-terminal stretch at 1 to 31 is a signal peptide; it reads MGLGLRGWGRPLLTVATALMLPVKPPAGSWG. A Peptidase S1 domain is found at 34–263; sequence IIGGHEVTPH…FVAWIWDVVR (230 aa). Cys59 and Cys75 are oxidised to a cystine. Active-site charge relay system residues include His74 and Asp122. 2 N-linked (GlcNAc...) asparagine glycosylation sites follow: Asn129 and Asn189. Intrachain disulfides connect Cys157-Cys224, Cys188-Cys202, and Cys214-Cys239. Ser218 serves as the catalytic Charge relay system.

The protein belongs to the peptidase S1 family. Post-translationally, after cleavage of the signal peptide, the N-terminus is probably further processed by CTSC. Processing by CTSC is probably required for accumulation in cytoplasmic granules; in the absence of CTSC the protein does not accumulate. In terms of processing, N-glycosylated. In terms of tissue distribution, detected in peripheral blood neutrophil granulocytes, but not in other types of leukocytes. Detected in neutrophils and neutrophil precursors in bone marrow (at protein level). Detected in myeloblasts and promyelocytes in bone marrow.

It localises to the cytoplasmic granule lumen. Its subcellular location is the secreted. Its activity is regulated as follows. Inhibited by SERPINA1, SERPINC1 and SERPING1. Its function is as follows. Serine protease that cleaves preferentially after Arg residues. Can also cleave after citrulline (deimidated arginine) and methylarginine residues. This Homo sapiens (Human) protein is Serine protease 57 (PRSS57).